Reading from the N-terminus, the 123-residue chain is WAP four-disulfide core domain protein 5 (123 aa).

The first 24 residues, 1–24 (MRIQSLLLLGALLAVGSQLPAVFG), serve as a signal peptide directing secretion. WAP domains lie at 27-73 (KGEK…CVPR) and 74-121 (VSVK…RDPA). Intrachain disulfides connect Cys-34–Cys-62, Cys-41–Cys-66, Cys-49–Cys-61, Cys-55–Cys-70, Cys-81–Cys-109, Cys-88–Cys-113, Cys-96–Cys-108, and Cys-102–Cys-117.

It is found in the secreted. Putative acid-stable proteinase inhibitor. The polypeptide is WAP four-disulfide core domain protein 5 (WFDC5) (Papio anubis (Olive baboon)).